The following is a 247-amino-acid chain: ATP synthase subunit a, chloroplastic (247 aa).

5 helical membrane-spanning segments follow: residues 38-58 (QVLI…TIAV), 95-115 (VPFI…GALL), 134-154 (INTT…AGLT), 199-219 (LVVV…VMLL), and 220-240 (GLFT…AYIG).

The protein belongs to the ATPase A chain family. F-type ATPases have 2 components, CF(1) - the catalytic core - and CF(0) - the membrane proton channel. CF(1) has five subunits: alpha(3), beta(3), gamma(1), delta(1), epsilon(1). CF(0) has four main subunits: a, b, b' and c.

It is found in the plastid. It localises to the chloroplast thylakoid membrane. In terms of biological role, key component of the proton channel; it plays a direct role in the translocation of protons across the membrane. In Solanum lycopersicum (Tomato), this protein is ATP synthase subunit a, chloroplastic.